Here is a 76-residue protein sequence, read N- to C-terminus: Large ribosomal subunit protein bL28 (76 aa).

This sequence belongs to the bacterial ribosomal protein bL28 family.

In Opitutus terrae (strain DSM 11246 / JCM 15787 / PB90-1), this protein is Large ribosomal subunit protein bL28.